Here is a 154-residue protein sequence, read N- to C-terminus: Large ribosomal subunit protein bL9c (154 aa).

This sequence belongs to the bacterial ribosomal protein bL9 family.

The protein resides in the plastid. Its subcellular location is the chloroplast. Its function is as follows. Binds to the 23S rRNA. The protein is Large ribosomal subunit protein bL9c of Gracilaria tenuistipitata var. liui (Red alga).